The primary structure comprises 395 residues: Phosphoglycerate kinase (395 aa).

Residues 22 to 24, arginine 38, 61 to 64, arginine 119, and arginine 152 contribute to the substrate site; these read DFN and HLGR. ATP is bound by residues lysine 203, glycine 294, glutamate 325, and 351 to 354; that span reads GGDT.

It belongs to the phosphoglycerate kinase family. Monomer.

It is found in the cytoplasm. It carries out the reaction (2R)-3-phosphoglycerate + ATP = (2R)-3-phospho-glyceroyl phosphate + ADP. The protein operates within carbohydrate degradation; glycolysis; pyruvate from D-glyceraldehyde 3-phosphate: step 2/5. The sequence is that of Phosphoglycerate kinase from Hydrogenobaculum sp. (strain Y04AAS1).